The primary structure comprises 83 residues: Small ribosomal subunit protein bS16 (83 aa).

It belongs to the bacterial ribosomal protein bS16 family.

This is Small ribosomal subunit protein bS16 from Verminephrobacter eiseniae (strain EF01-2).